The primary structure comprises 1006 residues: SAC3 family protein A (1006 aa).

7 disordered regions span residues 1-75, 106-162, 183-239, 266-326, 516-550, 595-638, and 650-690; these read MNHG…GPAT, TPYQ…PGSY, GYQS…TIAT, GTEK…AVST, TVTT…RWEP, GFKP…SDKD, and AGSA…GNLH. 2 stretches are compositionally biased toward polar residues: residues 26–75 and 106–115; these read GSQT…GPAT and TPYQTSSDPH. The span at 116–140 shows a compositional bias: low complexity; the sequence is NYSNTGYSNYYSGYQQQPSQSYPQP. Residues 144-162 are compositionally biased toward polar residues; sequence YQNTGAPQPLSSFQNPGSY. Polar residues-rich tracts occupy residues 269-282 and 313-326; these read KLST…SQSF and SHPP…AVST. A compositionally biased stretch (low complexity) spans 516–539; that stretch reads TVTTTNVTNSESSSAQLSSLQNKS. Over residues 609-618 the composition is skewed to basic residues; the sequence is SFQRPVKRQR. The segment covering 653–680 has biased composition (basic and acidic residues); the sequence is AEEKKRRDSRSKRFEKIQGHSRGNDLTK. Residues 804 to 978 enclose the PCI domain; the sequence is DLPEYNQCLS…DMLLDTKATS (175 aa).

Belongs to the SAC3 family. Interacts with EER5, SAC3B and CML20.

The protein resides in the nucleus. Component of the TREX-2 complex (transcription and export complex 2), a muliprotein complex that functions in docking export-competent ribonucleoprotein particles (mRNPs) to the nuclear entrance of the nuclear pore complex (nuclear basket). TREX-2 participates in mRNA export and accurate chromatin positioning in the nucleus by tethering genes to the nuclear periphery. This is SAC3 family protein A from Arabidopsis thaliana (Mouse-ear cress).